The following is a 267-amino-acid chain: Eukaryotic translation initiation factor 3 subunit J (267 aa).

Positions 1–70 are disordered; that stretch reads MSWNDDDVFA…KDKKSSTDQV (70 aa). Acidic residues predominate over residues 24-38; that stretch reads WDAEEPIMESWDAEE. Over residues 39–66 the composition is skewed to basic and acidic residues; that stretch reads TPAKKETSPKPDSKKNAKKDSKKDKKSS. Residues 192 to 220 are a coiled coil; the sequence is IESIRQSIATLNVLMKDKEREERRARLAK.

This sequence belongs to the eIF-3 subunit J family. Component of the eukaryotic translation initiation factor 3 (eIF-3) complex.

Its subcellular location is the cytoplasm. In terms of biological role, component of the eukaryotic translation initiation factor 3 (eIF-3) complex, which is involved in protein synthesis of a specialized repertoire of mRNAs and, together with other initiation factors, stimulates binding of mRNA and methionyl-tRNAi to the 40S ribosome. The eIF-3 complex specifically targets and initiates translation of a subset of mRNAs involved in cell proliferation. The chain is Eukaryotic translation initiation factor 3 subunit J from Vanderwaltozyma polyspora (strain ATCC 22028 / DSM 70294 / BCRC 21397 / CBS 2163 / NBRC 10782 / NRRL Y-8283 / UCD 57-17) (Kluyveromyces polysporus).